The sequence spans 446 residues: Na(+)-translocating NADH-quinone reductase subunit A (446 aa).

This sequence belongs to the NqrA family. In terms of assembly, composed of six subunits; NqrA, NqrB, NqrC, NqrD, NqrE and NqrF.

It catalyses the reaction a ubiquinone + n Na(+)(in) + NADH + H(+) = a ubiquinol + n Na(+)(out) + NAD(+). Its function is as follows. NQR complex catalyzes the reduction of ubiquinone-1 to ubiquinol by two successive reactions, coupled with the transport of Na(+) ions from the cytoplasm to the periplasm. NqrA to NqrE are probably involved in the second step, the conversion of ubisemiquinone to ubiquinol. This chain is Na(+)-translocating NADH-quinone reductase subunit A, found in Vibrio vulnificus (strain CMCP6).